Consider the following 133-residue polypeptide: NADPH-dependent 7-cyano-7-deazaguanine reductase (133 aa).

Cys49 functions as the Thioimide intermediate in the catalytic mechanism. Residue Asp56 is the Proton donor of the active site. Substrate is bound by residues 71 to 73 (IEL) and 90 to 91 (HE).

Belongs to the GTP cyclohydrolase I family. QueF type 1 subfamily.

The protein localises to the cytoplasm. The catalysed reaction is 7-aminomethyl-7-carbaguanine + 2 NADP(+) = 7-cyano-7-deazaguanine + 2 NADPH + 3 H(+). It functions in the pathway tRNA modification; tRNA-queuosine biosynthesis. Catalyzes the NADPH-dependent reduction of 7-cyano-7-deazaguanine (preQ0) to 7-aminomethyl-7-deazaguanine (preQ1). This Leptospira borgpetersenii serovar Hardjo-bovis (strain JB197) protein is NADPH-dependent 7-cyano-7-deazaguanine reductase.